We begin with the raw amino-acid sequence, 278 residues long: Ribosomal protein L11 methyltransferase (278 aa).

Residues Thr-131, Gly-152, Asp-173, and Asn-214 each coordinate S-adenosyl-L-methionine.

The protein belongs to the methyltransferase superfamily. PrmA family.

Its subcellular location is the cytoplasm. The catalysed reaction is L-lysyl-[protein] + 3 S-adenosyl-L-methionine = N(6),N(6),N(6)-trimethyl-L-lysyl-[protein] + 3 S-adenosyl-L-homocysteine + 3 H(+). Functionally, methylates ribosomal protein L11. This is Ribosomal protein L11 methyltransferase from Campylobacter lari (strain RM2100 / D67 / ATCC BAA-1060).